A 172-amino-acid polypeptide reads, in one-letter code: Putative B3 domain-containing protein At1g05615 (172 aa).

The segment at residues 69–169 (VDEGKIIDFE…NLAMVPLTPT (101 aa)) is a DNA-binding region (TF-B3).

The protein resides in the nucleus. The protein is Putative B3 domain-containing protein At1g05615 of Arabidopsis thaliana (Mouse-ear cress).